A 349-amino-acid chain; its full sequence is NAC domain-containing protein JA2 (349 aa).

The 150-residue stretch at 14–163 (LPPGFRFYPT…EWVLCRIYKK (150 aa)) folds into the NAC domain. Residues 111-169 (VGIKKALVFYVGKAPKGSKTNWIMHEYRLFESSRKNNGSSKLDEWVLCRIYKKNSSGPK) mediate DNA binding. The tract at residues 169 to 194 (KPLMSGLHSSNEYSHGSSTSSSSQFD) is disordered. The segment covering 177-191 (SSNEYSHGSSTSSSS) has biased composition (low complexity).

In terms of tissue distribution, expressed in guard cells of the epidermis.

Its subcellular location is the nucleus. Transcription factor involved in abscisic acid-mediated stomatal closure. Regulates the expression of NCED1, a gene involved in the biosynthesis of abscisic acid (ABA). Required for the stomatal closure induced by the bacterial pathogen Pseudomonas syringae pv tomato DC3000, but not for stomatal reopening. The sequence is that of NAC domain-containing protein JA2 from Solanum lycopersicum (Tomato).